Consider the following 132-residue polypeptide: Arsenate reductase 1 (132 aa).

Active-site nucleophile residues include C10, C82, and C89. Cystine bridges form between C10–C82 and C82–C89.

The protein belongs to the low molecular weight phosphotyrosine protein phosphatase family. Thioredoxin-coupled ArsC subfamily.

It is found in the cytoplasm. The enzyme catalyses arsenate + [thioredoxin]-dithiol + H(+) = arsenite + [thioredoxin]-disulfide + H2O. Catalyzes the reduction of arsenate [As(V)] to arsenite [As(III)]. In Staphylococcus epidermidis (strain ATCC 35984 / DSM 28319 / BCRC 17069 / CCUG 31568 / BM 3577 / RP62A), this protein is Arsenate reductase 1.